The sequence spans 245 residues: Carboxymethylenebutenolidase homolog (245 aa).

At A2 the chain carries N-acetylalanine. N6-acetyllysine is present on K36. Residues C132, D179, and H212 contribute to the active site. Phosphoserine is present on S223.

The protein belongs to the dienelactone hydrolase family.

Its subcellular location is the cytoplasm. The protein resides in the cytosol. Its function is as follows. Cysteine hydrolase. The chain is Carboxymethylenebutenolidase homolog (CMBL) from Pongo abelii (Sumatran orangutan).